The following is a 298-amino-acid chain: Cytosolic Fe-S cluster assembly factor CFD1 (298 aa).

Position 25-32 (25-32 (GKGGVGKS)) interacts with ATP. 2 residues coordinate [4Fe-4S] cluster: cysteine 215 and cysteine 218.

This sequence belongs to the Mrp/NBP35 ATP-binding proteins family. NUBP2/CFD1 subfamily. Heterotetramer of 2 NBP35 and 2 CFD1 chains. [4Fe-4S] cluster serves as cofactor.

The protein localises to the cytoplasm. Component of the cytosolic iron-sulfur (Fe/S) protein assembly (CIA) machinery. Required for maturation of extramitochondrial Fe-S proteins. The NBP35-CFD1 heterotetramer forms a Fe-S scaffold complex, mediating the de novo assembly of an Fe-S cluster and its transfer to target apoproteins. Required for biogenesis and export of both ribosomal subunits, which may reflect a role in assembly of the Fe/S clusters in RLI1, a protein which performs rRNA processing and ribosome export. This chain is Cytosolic Fe-S cluster assembly factor CFD1, found in Debaryomyces hansenii (strain ATCC 36239 / CBS 767 / BCRC 21394 / JCM 1990 / NBRC 0083 / IGC 2968) (Yeast).